The primary structure comprises 297 residues: Protease HtpX homolog (297 aa).

The next 2 helical transmembrane spans lie at Ile-5–Ile-25 and Ile-44–Leu-64. Position 155 (His-155) interacts with Zn(2+). The active site involves Glu-156. His-159 lines the Zn(2+) pocket. 2 consecutive transmembrane segments (helical) span residues Leu-170–Val-190 and Phe-204–Ala-224. Position 230 (Glu-230) interacts with Zn(2+).

This sequence belongs to the peptidase M48B family. Zn(2+) serves as cofactor.

It localises to the cell membrane. In Bacillus licheniformis (strain ATCC 14580 / DSM 13 / JCM 2505 / CCUG 7422 / NBRC 12200 / NCIMB 9375 / NCTC 10341 / NRRL NRS-1264 / Gibson 46), this protein is Protease HtpX homolog.